A 79-amino-acid polypeptide reads, in one-letter code: Cell division topological specificity factor (79 aa).

It belongs to the MinE family.

In terms of biological role, prevents the cell division inhibition by proteins MinC and MinD at internal division sites while permitting inhibition at polar sites. This ensures cell division at the proper site by restricting the formation of a division septum at the midpoint of the long axis of the cell. This chain is Cell division topological specificity factor, found in Nitratiruptor sp. (strain SB155-2).